We begin with the raw amino-acid sequence, 232 residues long: Large ribosomal subunit protein uL1 (232 aa).

It belongs to the universal ribosomal protein uL1 family. In terms of assembly, part of the 50S ribosomal subunit.

Binds directly to 23S rRNA. The L1 stalk is quite mobile in the ribosome, and is involved in E site tRNA release. Its function is as follows. Protein L1 is also a translational repressor protein, it controls the translation of the L11 operon by binding to its mRNA. The polypeptide is Large ribosomal subunit protein uL1 (Xanthomonas oryzae pv. oryzae (strain KACC10331 / KXO85)).